Here is a 352-residue protein sequence, read N- to C-terminus: Ion-translocating oxidoreductase complex subunit D (352 aa).

The next 4 helical transmembrane spans lie at 20–40 (IMLLVLLAAVPGIAAQLWFFG), 42–62 (GTLVQILLASVSTLLAEALVL), 89–109 (IPPLAPWWMVVLGTVFAVIIA), and 123–143 (PAMIGYVVLLISFPVQMTSWL). T187 carries the FMN phosphoryl threonine modification. 5 helical membrane passes run 214–234 (ILAGAGWQWVNLAWLAGGLWL), 242–262 (WHIPLSFLVTLALCATLGWLF), 267–287 (LAAPQIHLLSGATMLGAFFIL), 301–321 (LIFGALAGLLVWLIRSFGGYP), and 322–342 (DGVAFAVLLANITVPLIDYYT).

The protein belongs to the NqrB/RnfD family. In terms of assembly, the complex is composed of six subunits: RsxA, RsxB, RsxC, RsxD, RsxE and RsxG. It depends on FMN as a cofactor.

Its subcellular location is the cell inner membrane. Functionally, part of a membrane-bound complex that couples electron transfer with translocation of ions across the membrane. Required to maintain the reduced state of SoxR. The chain is Ion-translocating oxidoreductase complex subunit D from Shigella sonnei (strain Ss046).